Reading from the N-terminus, the 527-residue chain is Peptide chain release factor 3 (527 aa).

Residues 9–277 enclose the tr-type G domain; sequence AKRRTFAIIS…AVVDWAPRPL (269 aa). Residues 18–25, 86–90, and 140–143 contribute to the GTP site; these read SHPDAGKT, DTPGH, and NKLD.

The protein belongs to the TRAFAC class translation factor GTPase superfamily. Classic translation factor GTPase family. PrfC subfamily.

It localises to the cytoplasm. Increases the formation of ribosomal termination complexes and stimulates activities of RF-1 and RF-2. It binds guanine nucleotides and has strong preference for UGA stop codons. It may interact directly with the ribosome. The stimulation of RF-1 and RF-2 is significantly reduced by GTP and GDP, but not by GMP. This Pseudomonas fluorescens (strain SBW25) protein is Peptide chain release factor 3.